Reading from the N-terminus, the 231-residue chain is Dephospho-CoA kinase (231 aa).

Residues 29–231 (RVGLTGGIAS…IAGALRFDRR (203 aa)) enclose the DPCK domain. Position 37 to 42 (37 to 42 (ASGKST)) interacts with ATP.

The protein belongs to the CoaE family.

The protein localises to the cytoplasm. The catalysed reaction is 3'-dephospho-CoA + ATP = ADP + CoA + H(+). It participates in cofactor biosynthesis; coenzyme A biosynthesis; CoA from (R)-pantothenate: step 5/5. Catalyzes the phosphorylation of the 3'-hydroxyl group of dephosphocoenzyme A to form coenzyme A. This is Dephospho-CoA kinase from Cutibacterium acnes (strain DSM 16379 / KPA171202) (Propionibacterium acnes).